Here is a 269-residue protein sequence, read N- to C-terminus: Formamidopyrimidine-DNA glycosylase (269 aa).

The active-site Schiff-base intermediate with DNA is the Pro2. Glu3 serves as the catalytic Proton donor. Lys57 serves as the catalytic Proton donor; for beta-elimination activity. Residues His90, Arg109, and Lys150 each coordinate DNA. The FPG-type zinc-finger motif lies at 235–269 (QVYGKGGKPCPRCDNPLSEMKIGQRASVFCSECQK). Arg259 serves as the catalytic Proton donor; for delta-elimination activity.

The protein belongs to the FPG family. In terms of assembly, monomer. Zn(2+) serves as cofactor.

The enzyme catalyses Hydrolysis of DNA containing ring-opened 7-methylguanine residues, releasing 2,6-diamino-4-hydroxy-5-(N-methyl)formamidopyrimidine.. The catalysed reaction is 2'-deoxyribonucleotide-(2'-deoxyribose 5'-phosphate)-2'-deoxyribonucleotide-DNA = a 3'-end 2'-deoxyribonucleotide-(2,3-dehydro-2,3-deoxyribose 5'-phosphate)-DNA + a 5'-end 5'-phospho-2'-deoxyribonucleoside-DNA + H(+). Its function is as follows. Involved in base excision repair of DNA damaged by oxidation or by mutagenic agents. Acts as a DNA glycosylase that recognizes and removes damaged bases. Has a preference for oxidized purines, such as 7,8-dihydro-8-oxoguanine (8-oxoG). Has AP (apurinic/apyrimidinic) lyase activity and introduces nicks in the DNA strand. Cleaves the DNA backbone by beta-delta elimination to generate a single-strand break at the site of the removed base with both 3'- and 5'-phosphates. The protein is Formamidopyrimidine-DNA glycosylase of Photobacterium profundum (strain SS9).